The primary structure comprises 441 residues: D-aminoacyl-tRNA deacylase (441 aa).

The protein belongs to the DtdA deacylase family. As to quaternary structure, monomer. Zn(2+) serves as cofactor.

The enzyme catalyses a D-aminoacyl-tRNA + H2O = a tRNA + a D-alpha-amino acid + H(+). It carries out the reaction glycyl-tRNA(Ala) + H2O = tRNA(Ala) + glycine + H(+). Functionally, D-aminoacyl-tRNA deacylase with broad substrate specificity. By recycling D-aminoacyl-tRNA to D-amino acids and free tRNA molecules, this enzyme counteracts the toxicity associated with the formation of D-aminoacyl-tRNA entities in vivo. This is D-aminoacyl-tRNA deacylase from Natronomonas pharaonis (strain ATCC 35678 / DSM 2160 / CIP 103997 / JCM 8858 / NBRC 14720 / NCIMB 2260 / Gabara) (Halobacterium pharaonis).